The chain runs to 545 residues: Purple acid phosphatase 13 (545 aa).

The signal sequence occupies residues 1-25; sequence MVVKYTMSMSFFVIFASTVTIIVHG. N-linked (GlcNAc...) asparagine glycosylation is found at asparagine 125 and asparagine 145. Aspartate 203 lines the Fe cation pocket. Asparagine 209 is a glycosylation site (N-linked (GlcNAc...) asparagine). Tyrosine 233 is a binding site for Fe cation. N-linked (GlcNAc...) asparagine glycosylation is found at asparagine 240, asparagine 254, asparagine 306, asparagine 321, asparagine 351, and asparagine 367. Histidine 389 serves as the catalytic Proton donor. Histidine 416 serves as a coordination point for Zn(2+). A substrate-binding site is contributed by 416-418; it reads HVD. N-linked (GlcNAc...) asparagine glycosylation is found at asparagine 428, asparagine 466, asparagine 475, and asparagine 510.

Belongs to the metallophosphoesterase superfamily. Purple acid phosphatase family. In terms of assembly, homodimer. The cofactor is Fe cation. Zn(2+) is required as a cofactor. As to expression, expressed in stems, leaves, flowers and siliques.

The protein localises to the secreted. The catalysed reaction is a phosphate monoester + H2O = an alcohol + phosphate. This Arabidopsis thaliana (Mouse-ear cress) protein is Purple acid phosphatase 13 (PAP13).